Consider the following 939-residue polypeptide: Isoleucine--tRNA ligase (939 aa).

The 'HIGH' region signature appears at 58 to 68 (PYANGNIHIGH). Glu562 provides a ligand contact to L-isoleucyl-5'-AMP. The 'KMSKS' region motif lies at 603–607 (KMSKS). Position 606 (Lys606) interacts with ATP. Residues Cys903, Cys906, Cys922, and Cys925 each coordinate Zn(2+).

The protein belongs to the class-I aminoacyl-tRNA synthetase family. IleS type 1 subfamily. As to quaternary structure, monomer. The cofactor is Zn(2+).

It is found in the cytoplasm. It catalyses the reaction tRNA(Ile) + L-isoleucine + ATP = L-isoleucyl-tRNA(Ile) + AMP + diphosphate. Functionally, catalyzes the attachment of isoleucine to tRNA(Ile). As IleRS can inadvertently accommodate and process structurally similar amino acids such as valine, to avoid such errors it has two additional distinct tRNA(Ile)-dependent editing activities. One activity is designated as 'pretransfer' editing and involves the hydrolysis of activated Val-AMP. The other activity is designated 'posttransfer' editing and involves deacylation of mischarged Val-tRNA(Ile). This Buchnera aphidicola subsp. Baizongia pistaciae (strain Bp) protein is Isoleucine--tRNA ligase.